The chain runs to 162 residues: Caveolin-2 (162 aa).

Topologically, residues 1–86 (MGLETEKADV…FEISKYVLYK (86 aa)) are cytoplasmic. Phosphotyrosine; by SRC is present on Y19. A phosphoserine mark is found at S20 and S23. An intramembrane region (helical) is located at residues 87-107 (FLTVFLAIPLAFAAGVLFAVL). Residues 108-162 (SCLHIWILMPFVKTCLMVLPSVQTIWRSVTDVVIAPLCASIGRSFSSVGLQLSHD) are Cytoplasmic-facing.

Belongs to the caveolin family. As to quaternary structure, monomer or homodimer. Interacts with CAV1; the interaction forms a stable heterooligomeric complex that is required for targeting to lipid rafts and for caveolae formation. Tyrosine phosphorylated forms do not form heterooligomers with the Tyr-19-phosphorylated form existing as a monomer or dimer. Interacts (tyrosine phosphorylated form) with the SH2 domain-containing proteins, RASA1, NCK1 and SRC. Interacts (tyrosine phosphorylated form) with INSR. Interacts (Tyr-19 phosphorylated form) with MAPK1 (phosphorylated form); the interaction, promoted by insulin, leads to nuclear location and MAPK1 activation. Interacts with STAT3; the interaction is increased on insulin-induced tyrosine phosphorylation leading to STAT activation. In terms of processing, phosphorylated on serine and tyrosine residues. CAV1 promotes phosphorylation on Ser-23 which then targets the complex to the plasma membrane, lipid rafts and caveolae. Phosphorylation on Tyr-19 is required for insulin-induced phosphorylation of MAPK1 and DNA binding of STAT3. Tyrosine phosphorylation is induced by both EGF and insulin.

It localises to the nucleus. The protein localises to the cytoplasm. Its subcellular location is the golgi apparatus membrane. It is found in the cell membrane. The protein resides in the membrane. It localises to the caveola. Functionally, may act as a scaffolding protein within caveolar membranes. Interacts directly with G-protein alpha subunits and can functionally regulate their activity. Acts as an accessory protein in conjunction with CAV1 in targeting to lipid rafts and driving caveolae formation. Positive regulator of cellular mitogenesis of the MAPK signaling pathway. Required for the insulin-stimulated nuclear translocation and activation of MAPK1 and STAT3, and the subsequent regulation of cell cycle progression. The protein is Caveolin-2 (CAV2) of Oryctolagus cuniculus (Rabbit).